Here is a 323-residue protein sequence, read N- to C-terminus: Putative HTH-type transcriptional regulatory protein Hlac_0273 (323 aa).

The 58-residue stretch at 132-189 folds into the HTH cro/C1-type domain; the sequence is LADEREERGWSLGRLATELGVSRRTVSKYEDGMNASIEVAIQLEDLFNEPFSSPVDVL. The H-T-H motif DNA-binding region spans 143–162; the sequence is LGRLATELGVSRRTVSKYED. The disordered stretch occupies residues 188–211; the sequence is VLDGAGEVRDADPTPSAPETDPDD.

This is Putative HTH-type transcriptional regulatory protein Hlac_0273 from Halorubrum lacusprofundi (strain ATCC 49239 / DSM 5036 / JCM 8891 / ACAM 34).